The following is a 493-amino-acid chain: Dihydro-heme d1 dehydrogenase (493 aa).

An N-terminal signal peptide occupies residues 1–18 (MRLIGLALGLLLGALAQA). The region spanning 19–96 (GEAPGEALYR…ALVAYLYQAP (78 aa)) is the Cytochrome c domain. Cysteine 31, cysteine 34, histidine 35, arginine 68, and methionine 73 together coordinate heme c. The tract at residues 114–468 (PHPLATLPSR…YDAHSLEEVK (355 aa)) is D1-heme domain. Heme d1 contacts are provided by histidine 165, glycine 167, lysine 169, arginine 182, arginine 207, asparagine 208, histidine 341, arginine 390, and histidine 435. A heme c-binding site is contributed by arginine 182.

Belongs to the cytochrome c family. Monomer. The cofactor is heme c.

The protein localises to the periplasm. The enzyme catalyses dihydro-heme d1 + A = heme d1 + AH2. Its pathway is porphyrin-containing compound metabolism. Its function is as follows. Involved in heme d1 biosynthesis. Catalyzes the introduction of a double bond into the propionate side chain of pyrrole ring D of dihydro-heme d1, therefore converting dihydro-heme d1 to heme d1. The sequence is that of Dihydro-heme d1 dehydrogenase from Pseudomonas aeruginosa (strain ATCC 15692 / DSM 22644 / CIP 104116 / JCM 14847 / LMG 12228 / 1C / PRS 101 / PAO1).